Here is a 325-residue protein sequence, read N- to C-terminus: CRISPR-associated endonuclease Cas1 3 (325 aa).

Mn(2+) contacts are provided by glutamate 152, histidine 217, and glutamate 232.

This sequence belongs to the CRISPR-associated endonuclease Cas1 family. In terms of assembly, homodimer, forms a heterotetramer with a Cas2 homodimer. The cofactor is Mg(2+). It depends on Mn(2+) as a cofactor.

CRISPR (clustered regularly interspaced short palindromic repeat), is an adaptive immune system that provides protection against mobile genetic elements (viruses, transposable elements and conjugative plasmids). CRISPR clusters contain spacers, sequences complementary to antecedent mobile elements, and target invading nucleic acids. CRISPR clusters are transcribed and processed into CRISPR RNA (crRNA). Acts as a dsDNA endonuclease. Involved in the integration of spacer DNA into the CRISPR cassette. The protein is CRISPR-associated endonuclease Cas1 3 of Thermodesulfovibrio yellowstonii (strain ATCC 51303 / DSM 11347 / YP87).